The following is a 135-amino-acid chain: VapC ribonuclease aq_1901 (135 aa).

In terms of domain architecture, PINc spans 3-130; that stretch reads LLDTTVLLDF…FKKLGFKTVN (128 aa). Asp5 lines the Mg(2+) pocket.

The protein belongs to the PINc/VapC protein family. Mg(2+) serves as cofactor.

In terms of biological role, toxic component of a type II toxin-antitoxin (TA) system. An RNase. The polypeptide is VapC ribonuclease aq_1901 (Aquifex aeolicus (strain VF5)).